The sequence spans 318 residues: Taste receptor type 2 member 7 (318 aa).

Topologically, residues 1 to 9 are extracellular; it reads MTDKVQTTL. A helical membrane pass occupies residues 10-30; the sequence is LFLAVGEFSVGILGNAFIGLV. Topologically, residues 31–55 are cytoplasmic; it reads NCMDWIKKRKIASIDLILTSLAISR. A helical transmembrane segment spans residues 56–76; it reads ICLLCVILLDCFILVLYPDVY. At 77–94 the chain is on the extracellular side; that stretch reads ATGKEMRIIDFFWILTNH. A helical membrane pass occupies residues 95 to 115; it reads LSIWFATCLSIYYFFKIANFF. Residues 116–128 are Cytoplasmic-facing; that stretch reads HPLFLWMKWRIDR. Residues 129–149 traverse the membrane as a helical segment; that stretch reads VISWILLGCMVLSVFISLPAT. Residues 150 to 187 lie on the Extracellular side of the membrane; sequence ENLNADFRFCVKAKRKTNLTWSCRVNKTQHASIKLLLN. Asparagine 167 and asparagine 175 each carry an N-linked (GlcNAc...) asparagine glycan. A helical transmembrane segment spans residues 188–208; it reads LATLLPFCVCLMSFFLLILSL. At 209–235 the chain is on the cytoplasmic side; sequence RRHIRRMQLSATGCRDPSTEAHVRALK. The helical transmembrane segment at 236 to 256 threads the bilayer; sequence AVISFLLLFIAYYLSFLIATS. Over 257–266 the chain is Extracellular; the sequence is SYFMPETELA. A helical membrane pass occupies residues 267-287; sequence VIFGESIALIYPSSHSFILIL. The Cytoplasmic portion of the chain corresponds to 288–318; it reads GNNKLRHASLKVIWKVMSILKGRKFQQHKQI.

It belongs to the G-protein coupled receptor T2R family.

The protein localises to the membrane. Functionally, gustducin-coupled receptor implicated in the perception of bitter compounds in the oral cavity and the gastrointestinal tract. Signals through PLCB2 and the calcium-regulated cation channel TRPM5. This is Taste receptor type 2 member 7 (TAS2R7) from Pongo pygmaeus (Bornean orangutan).